The primary structure comprises 20 residues: Phosphoglycerate kinase (20 aa).

The disordered stretch occupies residues 1 to 20 (MNKKSIRNVNLKGKRVFDRV).

The protein belongs to the phosphoglycerate kinase family. In terms of assembly, monomer.

Its subcellular location is the cytoplasm. The catalysed reaction is (2R)-3-phosphoglycerate + ATP = (2R)-3-phospho-glyceroyl phosphate + ADP. It participates in carbohydrate degradation; glycolysis; pyruvate from D-glyceraldehyde 3-phosphate: step 2/5. The protein is Phosphoglycerate kinase of Bacillus cereus.